Reading from the N-terminus, the 227-residue chain is Large ribosomal subunit protein uL3 (227 aa).

Glutamine 151 carries the N5-methylglutamine modification.

The protein belongs to the universal ribosomal protein uL3 family. In terms of assembly, part of the 50S ribosomal subunit. Forms a cluster with proteins L14 and L19. Post-translationally, methylated by PrmB.

Its function is as follows. One of the primary rRNA binding proteins, it binds directly near the 3'-end of the 23S rRNA, where it nucleates assembly of the 50S subunit. The chain is Large ribosomal subunit protein uL3 from Gluconacetobacter diazotrophicus (strain ATCC 49037 / DSM 5601 / CCUG 37298 / CIP 103539 / LMG 7603 / PAl5).